The sequence spans 211 residues: GTP pyrophosphokinase YjbM (211 aa).

Guanosine 3'-diphosphate 5'-triphosphate contacts are provided by residues 21–28 (KVKLKGIR), 41–42 (EF), and 46–48 (RVK). ATP-binding positions include 46-48 (RVK), S52, 56-59 (KARR), D72, and R77. R59 lines the guanosine 3'-diphosphate 5'-triphosphate pocket. D72 is a Mg(2+) binding site. Guanosine 3'-diphosphate 5'-triphosphate-binding positions include R105, 112 to 114 (KES), and H120. The active-site Proton acceptor is E139. Guanosine 3'-diphosphate 5'-triphosphate-binding positions include N148 and 151–155 (ATIEH).

It belongs to the RelA/SpoT family. As to quaternary structure, homotetramer.

It carries out the reaction GTP + ATP = guanosine 3'-diphosphate 5'-triphosphate + AMP. The catalysed reaction is GDP + ATP = guanosine 3',5'-bis(diphosphate) + AMP. Its pathway is purine metabolism; ppGpp biosynthesis; ppGpp from GTP: step 1/2. Allosterically regulated by its own products; pppGpp simulates synthesis 10-fold more than ppGpp. 2 pppGpp molecules bind in a regulatory cleft in the middle of the tetramer in an asymmetric manner. There is a specific contact of Lys-25 to the gamma-phosphate of pppGpp, explaining why pppGpp stimulates activity but ppGpp does not. Functions as a (p)ppGpp synthase; GDP can be used instead of GTP, resulting in an increase of (p)ppGpp synthesis. The enzyme binds ATP, then GDP or GTP and catalysis is highly cooperative. In eubacteria ppGpp (guanosine 3'-diphosphate 5'-diphosphate) is a mediator of the stringent response that coordinates a variety of cellular activities in response to changes in nutritional abundance. Probably has a minor role in the stringent response. This chain is GTP pyrophosphokinase YjbM (yjbM), found in Bacillus subtilis (strain 168).